A 242-amino-acid chain; its full sequence is Ribonuclease PH (242 aa).

Residues Arg-86 and 124–126 (GTR) contribute to the phosphate site.

It belongs to the RNase PH family. In terms of assembly, homohexameric ring arranged as a trimer of dimers.

The enzyme catalyses tRNA(n+1) + phosphate = tRNA(n) + a ribonucleoside 5'-diphosphate. Functionally, phosphorolytic 3'-5' exoribonuclease that plays an important role in tRNA 3'-end maturation. Removes nucleotide residues following the 3'-CCA terminus of tRNAs; can also add nucleotides to the ends of RNA molecules by using nucleoside diphosphates as substrates, but this may not be physiologically important. Probably plays a role in initiation of 16S rRNA degradation (leading to ribosome degradation) during starvation. The protein is Ribonuclease PH of Caulobacter sp. (strain K31).